We begin with the raw amino-acid sequence, 237 residues long: DNA repair protein RecO (237 aa).

Belongs to the RecO family.

Involved in DNA repair and RecF pathway recombination. This Rickettsia peacockii (strain Rustic) protein is DNA repair protein RecO.